The primary structure comprises 92 residues: Small ribosomal subunit protein uS19 (92 aa).

This sequence belongs to the universal ribosomal protein uS19 family.

Its function is as follows. Protein S19 forms a complex with S13 that binds strongly to the 16S ribosomal RNA. The polypeptide is Small ribosomal subunit protein uS19 (Vibrio campbellii (strain ATCC BAA-1116)).